We begin with the raw amino-acid sequence, 278 residues long: Tryptophan synthase alpha chain (278 aa).

Residues glutamate 50 and aspartate 61 each act as proton acceptor in the active site.

The protein belongs to the TrpA family. Tetramer of two alpha and two beta chains.

The enzyme catalyses (1S,2R)-1-C-(indol-3-yl)glycerol 3-phosphate + L-serine = D-glyceraldehyde 3-phosphate + L-tryptophan + H2O. The protein operates within amino-acid biosynthesis; L-tryptophan biosynthesis; L-tryptophan from chorismate: step 5/5. Functionally, the alpha subunit is responsible for the aldol cleavage of indoleglycerol phosphate to indole and glyceraldehyde 3-phosphate. In Rhodopseudomonas palustris (strain ATCC BAA-98 / CGA009), this protein is Tryptophan synthase alpha chain.